Reading from the N-terminus, the 314-residue chain is tRNA uridine(34) hydroxylase (314 aa).

The Rhodanese domain maps to 140–234 (SRDDVILVDT…YLEETPAEES (95 aa)). The active-site Cysteine persulfide intermediate is Cys194.

This sequence belongs to the TrhO family.

It carries out the reaction uridine(34) in tRNA + AH2 + O2 = 5-hydroxyuridine(34) in tRNA + A + H2O. In terms of biological role, catalyzes oxygen-dependent 5-hydroxyuridine (ho5U) modification at position 34 in tRNAs. The sequence is that of tRNA uridine(34) hydroxylase from Acinetobacter baylyi (strain ATCC 33305 / BD413 / ADP1).